The primary structure comprises 202 residues: Secreted RxLR effector protein 93 (202 aa).

Positions 1–16 (MRFYLTKLFAAAGALA) are cleaved as a signal peptide. The disordered stretch occupies residues 29–58 (TPVSPLSRSSDHHQSDDSTQRRLRTLNGAD). Over residues 37–48 (SSDHHQSDDSTQ) the composition is skewed to basic and acidic residues. The RxLR-dEER signature appears at 49–61 (RRLRTLNGADEER).

It belongs to the RxLR effector family.

Its subcellular location is the secreted. It is found in the host nucleus. In terms of biological role, secreted effector that completely suppresses the host cell death induced by cell death-inducing proteins. This Plasmopara viticola (Downy mildew of grapevine) protein is Secreted RxLR effector protein 93.